The sequence spans 267 residues: NAD kinase 2 (267 aa).

Aspartate 52 serves as the catalytic Proton acceptor. NAD(+) is bound by residues 52 to 53 (DG), 124 to 125 (NE), arginine 151, aspartate 153, 164 to 169 (TGYNKS), and alanine 188.

This sequence belongs to the NAD kinase family. A divalent metal cation serves as cofactor.

It is found in the cytoplasm. It catalyses the reaction NAD(+) + ATP = ADP + NADP(+) + H(+). Functionally, involved in the regulation of the intracellular balance of NAD and NADP, and is a key enzyme in the biosynthesis of NADP. Catalyzes specifically the phosphorylation on 2'-hydroxyl of the adenosine moiety of NAD to yield NADP. The polypeptide is NAD kinase 2 (Geobacillus kaustophilus (strain HTA426)).